The primary structure comprises 539 residues: Protein ENTREP2 (539 aa).

4 helical membrane-spanning segments follow: residues Ile-31–Phe-51, Ser-65–Trp-85, Leu-89–Ala-109, and Leu-176–Ala-196. The interval Val-301–Val-481 is disordered. A compositionally biased stretch (polar residues) spans Pro-306–Phe-331. The span at Gly-347–Ala-365 shows a compositional bias: low complexity. Positions Ser-395–Met-408 are enriched in polar residues.

The protein belongs to the ENTREP family.

The protein localises to the membrane. This Homo sapiens (Human) protein is Protein ENTREP2.